The following is a 98-amino-acid chain: Integration host factor subunit beta (98 aa).

The protein belongs to the bacterial histone-like protein family. As to quaternary structure, heterodimer of an alpha and a beta chain.

Functionally, this protein is one of the two subunits of integration host factor, a specific DNA-binding protein that functions in genetic recombination as well as in transcriptional and translational control. This is Integration host factor subunit beta from Gluconacetobacter diazotrophicus (strain ATCC 49037 / DSM 5601 / CCUG 37298 / CIP 103539 / LMG 7603 / PAl5).